A 224-amino-acid polypeptide reads, in one-letter code: Polyadenylate-binding protein 2 (224 aa).

The segment covering 1-36 (MADEDITLNEDQLLESLEETNGEQETEIATEVEEEG) has biased composition (acidic residues). The segment at 1 to 40 (MADEDITLNEDQLLESLEETNGEQETEIATEVEEEGSMQI) is disordered. Residues 9 to 74 (NEDQLLESLE…QSEVDKQMAG (66 aa)) adopt a coiled-coil conformation. An RRM domain is found at 96–173 (RSVYVGNVDY…RQIKVMSKRT (78 aa)).

In terms of assembly, interacts with ZC3H3. As to expression, expressed ubiquitously in all transcriptionally active cells.

Its subcellular location is the nucleus. It is found in the cytoplasm. In terms of biological role, involved in the 3'-end formation of mRNA precursors (pre-mRNA) by the addition of a poly(A) tail of 200-250 nt to the upstream cleavage product. Stimulates poly(A) polymerase (PAPOLA) conferring processivity on the poly(A) tail elongation reaction and also controls the poly(A) tail length. Increases the affinity of poly(A) polymerase for RNA. Binds to poly(A) and to poly(G) with high affinity. May protect the poly(A) tail from degradation. Plays a role in the positive regulation of alpha-1,3 fucosylation, possibly by cooperating with swm which regulates nuclear export of fucosyltransferase FucTA. Involved in germline stem cell transit amplification, differentiation and mitosis-to-meiosis transition. In Drosophila melanogaster (Fruit fly), this protein is Polyadenylate-binding protein 2.